The sequence spans 346 residues: Uracil-DNA glycosylase (346 aa).

Residues 1–105 (MSGKITDFFE…KLKNEEKSEE (105 aa)) form a disordered region. Residues 20–29 (AENKDNDKEL) show a composition bias toward basic and acidic residues. Low complexity predominate over residues 30–42 (TSTTTTTTTTSTT). Basic residues predominate over residues 43-64 (SKKKVAAAPKKKAAVASKKRKH). Residues 67–86 (SDEETDKEEQQNDDDDDGEE) are compositionally biased toward acidic residues. The active-site Proton acceptor is Asp-186.

This sequence belongs to the uracil-DNA glycosylase (UDG) superfamily. UNG family.

The protein localises to the mitochondrion. Its subcellular location is the nucleus. The enzyme catalyses Hydrolyzes single-stranded DNA or mismatched double-stranded DNA and polynucleotides, releasing free uracil.. In terms of biological role, excises uracil residues from the DNA which can arise as a result of misincorporation of dUMP residues by DNA polymerase or due to deamination of cytosine. The polypeptide is Uracil-DNA glycosylase (uglA) (Dictyostelium discoideum (Social amoeba)).